Consider the following 301-residue polypeptide: Acetyl-coenzyme A carboxylase carboxyl transferase subunit beta (301 aa).

The region spanning 23-292 (VWTKCDSCGQ…PSPDEPRESV (270 aa)) is the CoA carboxyltransferase N-terminal domain. Residues Cys-27, Cys-30, Cys-46, and Cys-49 each contribute to the Zn(2+) site. The C4-type zinc-finger motif lies at 27–49 (CDSCGQVLYRAELERNLEVCPKC). Residues 280 to 301 (LPAPSPDEPRESVVVPDQEPEA) form a disordered region.

The protein belongs to the AccD/PCCB family. In terms of assembly, acetyl-CoA carboxylase is a heterohexamer composed of biotin carboxyl carrier protein (AccB), biotin carboxylase (AccC) and two subunits each of ACCase subunit alpha (AccA) and ACCase subunit beta (AccD). The cofactor is Zn(2+).

Its subcellular location is the cytoplasm. It catalyses the reaction N(6)-carboxybiotinyl-L-lysyl-[protein] + acetyl-CoA = N(6)-biotinyl-L-lysyl-[protein] + malonyl-CoA. Its pathway is lipid metabolism; malonyl-CoA biosynthesis; malonyl-CoA from acetyl-CoA: step 1/1. In terms of biological role, component of the acetyl coenzyme A carboxylase (ACC) complex. Biotin carboxylase (BC) catalyzes the carboxylation of biotin on its carrier protein (BCCP) and then the CO(2) group is transferred by the transcarboxylase to acetyl-CoA to form malonyl-CoA. The polypeptide is Acetyl-coenzyme A carboxylase carboxyl transferase subunit beta (Enterobacter sp. (strain 638)).